A 306-amino-acid polypeptide reads, in one-letter code: Non-specific ribonucleoside hydrolase RihC (306 aa).

Residue histidine 235 is part of the active site.

The protein belongs to the IUNH family. RihC subfamily.

In terms of biological role, hydrolyzes both purine and pyrimidine ribonucleosides with a broad-substrate specificity. This chain is Non-specific ribonucleoside hydrolase RihC, found in Salmonella heidelberg (strain SL476).